The following is a 166-amino-acid chain: Succinate dehydrogenase assembly factor 2, mitochondrial (166 aa).

A mitochondrion-targeting transit peptide spans methionine 1 to threonine 29.

It belongs to the SDHAF2 family. In terms of assembly, interacts with SDHA within the SDH catalytic dimer.

The protein localises to the mitochondrion matrix. In terms of biological role, plays an essential role in the assembly of succinate dehydrogenase (SDH), an enzyme complex (also referred to as respiratory complex II) that is a component of both the tricarboxylic acid (TCA) cycle and the mitochondrial electron transport chain, and which couples the oxidation of succinate to fumarate with the reduction of ubiquinone (coenzyme Q) to ubiquinol. Required for flavinylation (covalent attachment of FAD) of the flavoprotein subunit SDHA of the SDH catalytic dimer. The sequence is that of Succinate dehydrogenase assembly factor 2, mitochondrial from Bos taurus (Bovine).